The primary structure comprises 350 residues: Fe(3+) ions import ATP-binding protein FbpC (350 aa).

An ABC transporter domain is found at 4–236 (LDIINLSKSF…PNDEQTAHFL (233 aa)). Residue 36 to 43 (GPSGSGKT) coordinates ATP.

Belongs to the ABC transporter superfamily. Fe(3+) ion importer (TC 3.A.1.10) family. In terms of assembly, the complex is composed of two ATP-binding proteins (FbpC), two transmembrane proteins (FbpB) and a solute-binding protein (FbpA).

It localises to the cell inner membrane. It carries out the reaction Fe(3+)(out) + ATP + H2O = Fe(3+)(in) + ADP + phosphate + H(+). Its function is as follows. Part of the ABC transporter complex FbpABC involved in Fe(3+) ions import. Responsible for energy coupling to the transport system. This is Fe(3+) ions import ATP-binding protein FbpC from Pseudomonas fluorescens (strain Pf0-1).